A 191-amino-acid polypeptide reads, in one-letter code: Aminodeoxychorismate synthase component 2 (191 aa).

Residues 1–191 enclose the Glutamine amidotransferase type-1 domain; it reads MLLLIDNYDS…HQLLDNFLNR (191 aa). Residues C79, H172, and E174 contribute to the active site.

As to quaternary structure, monomer. Heterodimer consisting of two non-identical subunits: a glutamine amidotransferase subunit (PabA) and a aminodeoxychorismate synthase subunit (PabB).

The catalysed reaction is chorismate + L-glutamine = 4-amino-4-deoxychorismate + L-glutamate. It participates in cofactor biosynthesis; tetrahydrofolate biosynthesis; 4-aminobenzoate from chorismate: step 1/2. Part of a heterodimeric complex that catalyzes the two-step biosynthesis of 4-amino-4-deoxychorismate (ADC), a precursor of p-aminobenzoate (PABA) and tetrahydrofolate. In the first step, a glutamine amidotransferase (PabA) generates ammonia as a substrate that, along with chorismate, is used in the second step, catalyzed by aminodeoxychorismate synthase (PabB) to produce ADC. PabA converts glutamine into glutamate only in the presence of stoichiometric amounts of PabB. This Serratia marcescens protein is Aminodeoxychorismate synthase component 2 (pabA).